We begin with the raw amino-acid sequence, 156 residues long: Single-stranded DNA-binding protein 1 (156 aa).

Positions 1–107 (MNETMICAVG…IDAVAIGHDL (107 aa)) constitute an SSB domain. Residues 114–124 (FRRTARTEAST) show a composition bias toward low complexity. A disordered region spans residues 114–156 (FRRTARTEASTSPPRPEPNWEVPAGGTPGEPVPEQRPDPVPVG).

In terms of assembly, homotetramer.

The polypeptide is Single-stranded DNA-binding protein 1 (ssb1) (Streptomyces coelicolor (strain ATCC BAA-471 / A3(2) / M145)).